The primary structure comprises 720 residues: Putative fatty acid oxidation complex trifunctional enzyme (720 aa).

Positions 1 to 384 (MQNEIKKVCV…SWKYGPFELL (384 aa)) are 3-hydroxyacyl-CoA dehydrogenase. The interval 453–720 (FVITTKMNCL…TIEKLKAIVK (268 aa)) is enoyl-CoA hydratase/isomerase.

The protein in the N-terminal section; belongs to the 3-hydroxyacyl-CoA dehydrogenase family. In the C-terminal section; belongs to the enoyl-CoA hydratase/isomerase family.

It carries out the reaction a (3S)-3-hydroxyacyl-CoA + NAD(+) = a 3-oxoacyl-CoA + NADH + H(+). It catalyses the reaction a (3S)-3-hydroxyacyl-CoA = a (2E)-enoyl-CoA + H2O. The enzyme catalyses a 4-saturated-(3S)-3-hydroxyacyl-CoA = a (3E)-enoyl-CoA + H2O. The catalysed reaction is a (3Z)-enoyl-CoA = a 4-saturated (2E)-enoyl-CoA. It carries out the reaction a (3E)-enoyl-CoA = a 4-saturated (2E)-enoyl-CoA. This is Putative fatty acid oxidation complex trifunctional enzyme from Rickettsia felis (strain ATCC VR-1525 / URRWXCal2) (Rickettsia azadi).